We begin with the raw amino-acid sequence, 419 residues long: Histidine--tRNA ligase (419 aa).

This sequence belongs to the class-II aminoacyl-tRNA synthetase family. In terms of assembly, homodimer.

The protein localises to the cytoplasm. The enzyme catalyses tRNA(His) + L-histidine + ATP = L-histidyl-tRNA(His) + AMP + diphosphate + H(+). This chain is Histidine--tRNA ligase, found in Halothermothrix orenii (strain H 168 / OCM 544 / DSM 9562).